The sequence spans 392 residues: Formate-dependent phosphoribosylglycinamide formyltransferase (392 aa).

Residues Glu20 to Leu21 and Glu80 each bind N(1)-(5-phospho-beta-D-ribosyl)glycinamide. Residues Arg112, Lys153, Ser158–Gln163, Glu193–Ile196, and Glu201 contribute to the ATP site. The ATP-grasp domain maps to Arg117–Leu306. Mg(2+)-binding residues include Glu265 and Glu277. N(1)-(5-phospho-beta-D-ribosyl)glycinamide-binding positions include Asp284, Lys354, and Arg361–Arg362.

The protein belongs to the PurK/PurT family. Homodimer.

The catalysed reaction is N(1)-(5-phospho-beta-D-ribosyl)glycinamide + formate + ATP = N(2)-formyl-N(1)-(5-phospho-beta-D-ribosyl)glycinamide + ADP + phosphate + H(+). The protein operates within purine metabolism; IMP biosynthesis via de novo pathway; N(2)-formyl-N(1)-(5-phospho-D-ribosyl)glycinamide from N(1)-(5-phospho-D-ribosyl)glycinamide (formate route): step 1/1. Involved in the de novo purine biosynthesis. Catalyzes the transfer of formate to 5-phospho-ribosyl-glycinamide (GAR), producing 5-phospho-ribosyl-N-formylglycinamide (FGAR). Formate is provided by PurU via hydrolysis of 10-formyl-tetrahydrofolate. This chain is Formate-dependent phosphoribosylglycinamide formyltransferase, found in Geobacter metallireducens (strain ATCC 53774 / DSM 7210 / GS-15).